Here is a 662-residue protein sequence, read N- to C-terminus: Fructose-1,6-bisphosphatase class 3 (662 aa).

Belongs to the FBPase class 3 family. It depends on Mn(2+) as a cofactor.

The catalysed reaction is beta-D-fructose 1,6-bisphosphate + H2O = beta-D-fructose 6-phosphate + phosphate. The protein operates within carbohydrate biosynthesis; gluconeogenesis. The protein is Fructose-1,6-bisphosphatase class 3 of Clostridium tetani (strain Massachusetts / E88).